The primary structure comprises 753 residues: 5-methyltetrahydropteroyltriglutamate--homocysteine methyltransferase (753 aa).

5-methyltetrahydropteroyltri-L-glutamate is bound by residues 17–20 and K117; that span reads RELK. Residues 431–433 and E484 each bind L-homocysteine; that span reads IGS. Residues 431 to 433 and E484 each bind L-methionine; that span reads IGS. 5-methyltetrahydropteroyltri-L-glutamate is bound by residues 515–516 and W561; that span reads RC. D599 lines the L-homocysteine pocket. D599 is a binding site for L-methionine. E605 lines the 5-methyltetrahydropteroyltri-L-glutamate pocket. Zn(2+) contacts are provided by H641, C643, and E665. H694 serves as the catalytic Proton donor. C726 contacts Zn(2+).

The protein belongs to the vitamin-B12 independent methionine synthase family. The cofactor is Zn(2+).

The catalysed reaction is 5-methyltetrahydropteroyltri-L-glutamate + L-homocysteine = tetrahydropteroyltri-L-glutamate + L-methionine. It participates in amino-acid biosynthesis; L-methionine biosynthesis via de novo pathway; L-methionine from L-homocysteine (MetE route): step 1/1. Functionally, catalyzes the transfer of a methyl group from 5-methyltetrahydrofolate to homocysteine resulting in methionine formation. In Shigella boydii serotype 18 (strain CDC 3083-94 / BS512), this protein is 5-methyltetrahydropteroyltriglutamate--homocysteine methyltransferase.